The primary structure comprises 515 residues: MQIEMEEKFEDWRGKEAISGKHGGIKAAFIACVVETMENMVFLACSTNFMMYFTKSMNYSTPKAATMVTNFVGTSFLLTIFGGFVADSFLTRFAAFVLFGSIELLGLIMLTLQAHITKLQPQGGKKPSTPQSTVLFTGLYAIAIGVGGVKGSLPAHGGDQIGTRNQRLISGFFNWYFFSVCLGGFLAVTLMVWIEENIGWSSSFTISTAVLASAIFVFVAGCPMYRFKRPAGSPLTRIVNVFVSAARNRNRFVTDAEVVTQNHNSTDKSIHHNKFKFLNKAKLNNKISATQVEETRTFLALLPIFGSTIIMNCCVAQMGTFSVQQGMVTNRKLSRSFEIPVASLNAIPLLCMLSSLALYELFGKRILSNSERSSSFNLKRIGYGLALTSISMAVAAIVEVKRKHEAVHNNIKISVFWLELQFVMLSLSDMLTVGGMLEFFFRESPASMRSMSTALGWCSTAMGFFLSSVLVEVVNGITGWLRDDLNESRLELFYLVLCVLNTLNLFNYIFWAKRY.

Transmembrane regions (helical) follow at residues Gly24–Ala44, Phe71–Thr91, Phe93–Gln113, Val134–Pro154, Leu168–Val188, Phe204–Met224, Phe298–Met318, Ile339–Tyr359, Ile381–Lys401, Ile413–Val433, Ala461–Leu481, and Leu492–Ala512.

It belongs to the major facilitator superfamily. Proton-dependent oligopeptide transporter (POT/PTR) (TC 2.A.17) family. As to expression, expressed in siliques and flowers.

Its subcellular location is the membrane. Functionally, involved in (+) and (-)-abscisic acid transport (ABA) and in gibberellin import. The protein is Protein NRT1/ PTR FAMILY 4.1 (NPF4.1) of Arabidopsis thaliana (Mouse-ear cress).